The sequence spans 665 residues: MTSANKAIELQLQVKQNAEELQDFMRDLENWEKDIKQKDMELRRQNGVPEENLPPIRNGNFRKKKKGKAKESSKKTREENTKNRIKSYDYEAWAKLDVDRILDELDKDDSTHESLSQESESEEDGIHVDSQKALVLKEKGNKYFKQGKYDEAIDCYTKGMDADPYNPVLPTNRASAYFRLKKFAVAESDCNLAVALNRSYTKAYSRRGAARFALQKLEEAKKDYERVLELEPNNFEATNELRKISQALASKENSYPKEADIVIKSTEGERKQIEAQQNKQQAISEKDRGNGFFKEGKYERAIECYTRGIAADGANALLPANRAMAYLKIQKYEEAEKDCTQAILLDGSYSKAFARRGTARTFLGKLNEAKQDFETVLLLEPGNKQAVTELSKIKKELIEKGHWDDVFLDSTQRQNVVKPIDNPPHPGSTKPLKKVIIEETGNLIQTIDVPDSTTAAAPENNPINLANVIAATGTTSKKNSSQDDLFPTSDTPRAKVLKIEEVSDTSSLQPQASLKQDVCQSYSEKMPIEIEQKPAQFATTVLPPIPANSFQLESDFRQLKSSPDMLYQYLKQIEPSLYPKLFQKNLDPDVFNQIVKILHDFYIEKEKPLLIFEILQRLSELKRFDMAVMFMSETEKKIARALFNHIDKSGLKDSSVEELKKRYGG.

Thr2 bears the N-acetylthreonine mark. The TPR 1 repeat unit spans residues 8 to 41 (IELQLQVKQNAEELQDFMRDLENWEKDIKQKDME). Positions 37-82 (QKDMELRRQNGVPEENLPPIRNGNFRKKKKGKAKESSKKTREENTK) are disordered. Positions 69-82 (AKESSKKTREENTK) are enriched in basic and acidic residues. A phosphoserine mark is found at Ser87, Ser116, Ser119, and Ser121. Residues 109–129 (DSTHESLSQESESEEDGIHVD) form a disordered region. TPR repeat units follow at residues 133–166 (ALVLKEKGNKYFKQGKYDEAIDCYTKGMDADPYN), 168–200 (VLPTNRASAYFRLKKFAVAESDCNLAVALNRSY), 201–234 (TKAYSRRGAARFALQKLEEAKKDYERVLELEPNN), 282–315 (AISEKDRGNGFFKEGKYERAIECYTRGIAADGAN), 317–349 (LLPANRAMAYLKIQKYEEAEKDCTQAILLDGSY), and 350–383 (SKAFARRGTARTFLGKLNEAKQDFETVLLLEPGN). Residue Ser481 is modified to Phosphoserine. Lys498 is covalently cross-linked (Glycyl lysine isopeptide (Lys-Gly) (interchain with G-Cter in SUMO2)).

Belongs to the RPAP3 family. In terms of assembly, tightly associated with the RNA polymerase II complex. Component of the R2TP complex composed at least of RUVBL1, RUVBL2, RPAP3 and PIHD1. Component of the PAQosome complex which is responsible for the biogenesis of several protein complexes and which consists of R2TP complex members RUVBL1, RUVBL2, RPAP3 and PIH1D1, URI complex members PFDN2, PFDN6, PDRG1, UXT and URI1 as well as ASDURF, POLR2E and DNAAF10/WDR92. Interacts with PIH1D1. Interacts with TSC1 and TSC2. Interacts with PRPF8 and EFTUD2 in a ZNHIT2-dependent manner.

Functionally, forms an interface between the RNA polymerase II enzyme and chaperone/scaffolding protein, suggesting that it is required to connect RNA polymerase II to regulators of protein complex formation. The polypeptide is RNA polymerase II-associated protein 3 (RPAP3) (Homo sapiens (Human)).